Consider the following 374-residue polypeptide: CMP-N-acetylneuraminate-beta-1,4-galactoside alpha-2,3-sialyltransferase (374 aa).

The Cytoplasmic segment spans residues 1-8; the sequence is MGLLVFVR. Residues 9–28 traverse the membrane as a helical; Signal-anchor for type II membrane protein segment; that stretch reads NLLLALCLFLVLGFLYYSAW. Over 29 to 374 the chain is Lumenal; the sequence is KLHLLQWEDS…RVITDLSSGI (346 aa). 2 N-linked (GlcNAc...) asparagine glycosylation sites follow: N79 and N170. Residues C159 and C313 are joined by a disulfide bond.

This sequence belongs to the glycosyltransferase 29 family. In terms of processing, the soluble form derives from the membrane form by proteolytic processing. Found in all tissues tested. High expression found in brain, liver, kidney, colon, heart and lung.

It is found in the golgi apparatus. Its subcellular location is the golgi stack membrane. The protein localises to the secreted. The enzyme catalyses a beta-D-galactosyl-(1-&gt;4)-N-acetyl-beta-D-glucosaminyl derivative + CMP-N-acetyl-beta-neuraminate = an N-acetyl-alpha-neuraminyl-(2-&gt;3)-beta-D-galactosyl-(1-&gt;4)-N-acetyl-beta-D-glucosaminyl derivative + CMP + H(+). It participates in protein modification; protein glycosylation. Its function is as follows. Catalyzes the formation of the NeuAc-alpha-2,3-Gal-beta-1,4-GlcNAc-, NeuAc-alpha-2,3-Gal-beta-1,3-GlcNAc- and NeuAc-alpha-2,3-Gal-beta-1,3-GalNAc- sequences found in terminal carbohydrate groups of glycoproteins and glycolipids. The highest activity is toward Gal-beta-1,3-GlcNAc and the lowest toward Gal-beta-1,3-GalNAc. The protein is CMP-N-acetylneuraminate-beta-1,4-galactoside alpha-2,3-sialyltransferase (St3gal3) of Rattus norvegicus (Rat).